A 617-amino-acid chain; its full sequence is Kelch-like protein diablo (617 aa).

The tract at residues 1 to 55 is disordered; it reads MGDPLLPGSTGLGSGGTAAATGGTGTTGTGLGSGGTSGTERPPSPARLTHTSEKH. Positions 10-37 are enriched in gly residues; sequence TGLGSGGTAAATGGTGTTGTGLGSGGTS. The BTB domain maps to 73–140; the sequence is CDVVLNVGGR…CYTAHIIVEE (68 aa). Positions 175-277 constitute a BACK domain; the sequence is CLGIRAFADT…SPKFLVGTVG (103 aa). 6 Kelch repeats span residues 324–370, 372–418, 419–465, 467–512, 514–559, and 560–606; these read VLFA…VLND, LYAV…VLDG, FLYA…VLSG, LYAI…VFNN, IYAV…VVNG, and QLYA…VMRA.

It participates in protein modification; protein ubiquitination. In terms of biological role, probable substrate-specific adapter of an E3 ubiquitin-protein ligase complex which mediates the ubiquitination and subsequent proteasomal degradation of target proteins. May have a role in synapse differentiation and growth. The protein is Kelch-like protein diablo of Drosophila mojavensis (Fruit fly).